Reading from the N-terminus, the 541-residue chain is Arginine--tRNA ligase (541 aa).

Positions 119–129 (ANPTGPLHIGH) match the 'HIGH' region motif.

It belongs to the class-I aminoacyl-tRNA synthetase family. In terms of assembly, monomer.

The protein localises to the cytoplasm. The catalysed reaction is tRNA(Arg) + L-arginine + ATP = L-arginyl-tRNA(Arg) + AMP + diphosphate. The protein is Arginine--tRNA ligase of Helicobacter pylori (strain G27).